The following is a 187-amino-acid chain: Pyridoxal 5'-phosphate synthase subunit PdxT (187 aa).

Residue 47 to 49 (GES) coordinates L-glutamine. Catalysis depends on Cys76, which acts as the Nucleophile. Residues Arg102 and 128–129 (IR) contribute to the L-glutamine site. Active-site charge relay system residues include His165 and Glu167.

It belongs to the glutaminase PdxT/SNO family. As to quaternary structure, in the presence of PdxS, forms a dodecamer of heterodimers. Only shows activity in the heterodimer.

It carries out the reaction aldehydo-D-ribose 5-phosphate + D-glyceraldehyde 3-phosphate + L-glutamine = pyridoxal 5'-phosphate + L-glutamate + phosphate + 3 H2O + H(+). It catalyses the reaction L-glutamine + H2O = L-glutamate + NH4(+). It participates in cofactor biosynthesis; pyridoxal 5'-phosphate biosynthesis. Its function is as follows. Catalyzes the hydrolysis of glutamine to glutamate and ammonia as part of the biosynthesis of pyridoxal 5'-phosphate. The resulting ammonia molecule is channeled to the active site of PdxS. The chain is Pyridoxal 5'-phosphate synthase subunit PdxT from Methanococcus maripaludis (strain DSM 14266 / JCM 13030 / NBRC 101832 / S2 / LL).